A 393-amino-acid polypeptide reads, in one-letter code: 1-deoxy-D-xylulose 5-phosphate reductoisomerase (393 aa).

Residues Thr10, Gly11, Ser12, Ile13, Gln38, and Asn124 each coordinate NADPH. A 1-deoxy-D-xylulose 5-phosphate-binding site is contributed by Lys125. Glu126 is an NADPH binding site. A Mn(2+)-binding site is contributed by Asp150. The 1-deoxy-D-xylulose 5-phosphate site is built by Ser151, Glu152, Ser179, and His202. Glu152 provides a ligand contact to Mn(2+). Gly208 provides a ligand contact to NADPH. 1-deoxy-D-xylulose 5-phosphate-binding residues include Ser215, Asn220, Lys221, and Glu224. Position 224 (Glu224) interacts with Mn(2+).

This sequence belongs to the DXR family. It depends on Mg(2+) as a cofactor. The cofactor is Mn(2+).

It carries out the reaction 2-C-methyl-D-erythritol 4-phosphate + NADP(+) = 1-deoxy-D-xylulose 5-phosphate + NADPH + H(+). It participates in isoprenoid biosynthesis; isopentenyl diphosphate biosynthesis via DXP pathway; isopentenyl diphosphate from 1-deoxy-D-xylulose 5-phosphate: step 1/6. Functionally, catalyzes the NADPH-dependent rearrangement and reduction of 1-deoxy-D-xylulose-5-phosphate (DXP) to 2-C-methyl-D-erythritol 4-phosphate (MEP). The sequence is that of 1-deoxy-D-xylulose 5-phosphate reductoisomerase from Ralstonia nicotianae (strain ATCC BAA-1114 / GMI1000) (Ralstonia solanacearum).